Reading from the N-terminus, the 188-residue chain is Elongation factor P-like protein (188 aa).

This sequence belongs to the elongation factor P family.

The polypeptide is Elongation factor P-like protein (Marinobacter nauticus (strain ATCC 700491 / DSM 11845 / VT8) (Marinobacter aquaeolei)).